We begin with the raw amino-acid sequence, 38 residues long: Toxin Bot33 (38 aa).

3 disulfide bridges follow: Cys8-Cys28, Cys14-Cys33, and Cys18-Cys35.

The protein belongs to the short scorpion toxin superfamily. Potassium channel inhibitor family. Expressed by the venom gland.

It is found in the secreted. A probable toxin that has no activity on the tested mammalian voltage-gated potassium channels (when tested at 1 uM) and is not toxic to mice. It resembles alpha toxins that block voltage-gated potassium channels. In Buthus occitanus tunetanus (Common European scorpion), this protein is Toxin Bot33.